The primary structure comprises 434 residues: F-box/LRR-repeat protein 21 (434 aa).

Positions 39–85 (RLDWGSLPHRVVLCVFQYLPLIDRARASSVCRRWNEVFHIPDLWRKF) constitute an F-box domain. LRR repeat units follow at residues 140 to 165 (LVNC…SKSH), 187 to 213 (DTPV…KMSS), 214 to 239 (CPHV…ALNY), 242 to 265 (LSDE…RIDV), 322 to 347 (GRSV…VVCA), 349 to 374 (GIQV…GLSE), and 375 to 400 (CEVS…SIME).

As to quaternary structure, part of the SCF (SKP1-CUL1-F-box) E3 ubiquitin-protein ligase complex SCF(FBXL21) composed of CUL1, SKP1, RBX1 and FBXL21. Interacts with CRY2. Interacts with CRY1. In terms of tissue distribution, expressed in the adenohypophysis, hypothalamus (especially in the suprachiasmatic nucleus or nuclei, SCN) and pineal, all neuroendocrine structures associated with timing and homeostasis.

It is found in the cytoplasm. It localises to the cytosol. Its subcellular location is the nucleus. It participates in protein modification; protein ubiquitination. In terms of biological role, substrate-recognition component of the SCF(FBXL21) E3 ubiquitin ligase complex involved in circadian rhythm function. Plays a key role in the maintenance of both the speed and the robustness of the circadian clock oscillation. The SCF(FBXL21) complex mainly acts in the cytosol and mediates ubiquitination of CRY proteins (CRY1 and CRY2), leading to CRY proteins stabilization. The SCF(FBXL21) complex counteracts the activity of the SCF(FBXL3) complex and protects CRY proteins from degradation. Involved in the hypothalamic suprachiasmatic nucleus (SCN) clock regulating temporal organization of the daily activities. The protein is F-box/LRR-repeat protein 21 (Fbxl21) of Ovis aries (Sheep).